Reading from the N-terminus, the 839-residue chain is Pre-mRNA-splicing factor syf1 (839 aa).

HAT repeat units follow at residues 12–44, 46–78, 90–122, 124–158, 274–309, 377–415, 417–453, 470–502, 507–539, 541–575, 578–612, 650–684, and 686–720; these read YLIADQDTVYEQDLFRAPGSIKPWLAYIEYKQQ, GTLYEQAFVMERACKQLPRSYKLWKMYLEFRIN, AEYQKVNALFERALILLNKMPKIWEMYLSFLLQ, PLVTQTRRTFDRALRALPITQHNRIWKLYKAFARS, GNFEKARDVFEEGITTVMTVRDFTLIFDAYVEFEES, DNKEEIVNTYTAAIAAINPKKAHGKFSELWVNYAKFYES, GDLDTARVIFDKAVKVPFKSVAELADTWCEWAEMELR, APKKSTVDYFDETLSPQQRVHKSWKLWSFYVDL, ATLEETRKVYERIFELRIATPQTVVNYANLLEE, KYFEDSFKVYERGLDLFSYPVAFELWNLYLTKAVD, IGIERLRDLFEQALDGCPPKFAKPLYLMYGNLEEE, FGLTSTRPIYERAIAALPDQEAKEMCLKFADMERR, and GEIDRARAIYGHASQFCDPRTNAGFWQKWEAFEVQ. The disordered stretch occupies residues 758 to 839; sequence QRAQEGARER…IDLDDDMDAE (82 aa). The segment covering 762–782 has biased composition (basic and acidic residues); that stretch reads EGAREREGEEAGTDASKERAD. Residues 830–839 are compositionally biased toward acidic residues; the sequence is IDLDDDMDAE.

It belongs to the crooked-neck family. As to quaternary structure, associated with the spliceosome.

Its subcellular location is the nucleus. In terms of biological role, involved in pre-mRNA splicing and cell cycle progression. The chain is Pre-mRNA-splicing factor syf1 (syf1) from Aspergillus fumigatus (strain ATCC MYA-4609 / CBS 101355 / FGSC A1100 / Af293) (Neosartorya fumigata).